The chain runs to 243 residues: HTH-type transcriptional repressor NagR (243 aa).

The 69-residue stretch at 9–77 folds into the HTH gntR-type domain; that stretch reads IPIYYQIMEQ…KGRGTFVSKP (69 aa). A DNA-binding region (H-T-H motif) is located at residues 37–56; the sequence is EREYAEQFGISRMTVRQALS. Alpha-D-glucosamine 6-phosphate contacts are provided by residues 89-90, 133-135, Glu145, 165-167, Glu222, and Tyr228; these read FT, RVR, and SIY. N-acetyl-D-glucosamine 6-phosphate is bound by residues 89–90, 133–135, Glu145, 165–167, Glu222, and Tyr228; these read FT, RVR, and SIY.

As to quaternary structure, homodimer. Forms dimers via the C-terminal effector-binding domain. At high concentrations, probably forms polymers along the DNA.

Binding to DNA is allosterically inhibited by an effector molecule. Binding of the effector to the C-terminal domain leads to a conformational change that modulates binding to DNA and thereby regulates transcription of the target genes. Glucosamine-6-phosphate (GlcN6P) and/or N-acetylglucosamine-6-phosphate (GlcNAc6P) are putative effectors of NagR. Binding of GlcNAc6P may prevent the protein-protein interactions responsible for polymerization along the DNA, but not the specific DNA binding. In terms of biological role, main transcriptional repressor of genes involved in N-acetylglucosamine (GlcNAc) transport and utilization. Represses the expression of the nagAB and nagP operons by binding directly within their upstream regions. Binds to the DNA consensus sequence 5'-ATTGGTATAGACAACT-3'. Also acts as a weak repressor of mapB expression. The chain is HTH-type transcriptional repressor NagR from Bacillus subtilis (strain 168).